The following is a 284-amino-acid chain: 2-dehydro-3-deoxyphosphooctonate aldolase (284 aa).

Belongs to the KdsA family.

Its subcellular location is the cytoplasm. It carries out the reaction D-arabinose 5-phosphate + phosphoenolpyruvate + H2O = 3-deoxy-alpha-D-manno-2-octulosonate-8-phosphate + phosphate. The protein operates within carbohydrate biosynthesis; 3-deoxy-D-manno-octulosonate biosynthesis; 3-deoxy-D-manno-octulosonate from D-ribulose 5-phosphate: step 2/3. It functions in the pathway bacterial outer membrane biogenesis; lipopolysaccharide biosynthesis. The polypeptide is 2-dehydro-3-deoxyphosphooctonate aldolase (Histophilus somni (strain 129Pt) (Haemophilus somnus)).